The following is a 198-amino-acid chain: V-type ATP synthase subunit E (198 aa).

It belongs to the V-ATPase E subunit family.

Produces ATP from ADP in the presence of a proton gradient across the membrane. The chain is V-type ATP synthase subunit E from Clostridium perfringens (strain SM101 / Type A).